The primary structure comprises 525 residues: GMP synthase [glutamine-hydrolyzing] (525 aa).

Residues 8-206 (PLLILDFGSQ…VVDICKAPTE (199 aa)) enclose the Glutamine amidotransferase type-1 domain. Cys85 (nucleophile) is an active-site residue. Active-site residues include His180 and Glu182. One can recognise a GMPS ATP-PPase domain in the interval 207–400 (WTPEHIIDEA…LGLPHDMVYR (194 aa)). 234–240 (SGGVDSS) is a binding site for ATP.

In terms of assembly, homodimer.

The enzyme catalyses XMP + L-glutamine + ATP + H2O = GMP + L-glutamate + AMP + diphosphate + 2 H(+). It participates in purine metabolism; GMP biosynthesis; GMP from XMP (L-Gln route): step 1/1. Its function is as follows. Catalyzes the synthesis of GMP from XMP. The polypeptide is GMP synthase [glutamine-hydrolyzing] (Legionella pneumophila (strain Corby)).